Consider the following 465-residue polypeptide: Sodium-dependent phosphate transport protein 1 (465 aa).

N-linked (GlcNAc...) asparagine glycans are attached at residues N47 and N56. A run of 10 helical transmembrane segments spans residues 79 to 99 (GIIFSSIFYGAFLIQIPVGYI), 109 to 129 (IGFALFLSSLVSIFIPQAAAV), 171 to 191 (MSLSGFLLGPFIVLLVTGIIC), 198 to 218 (MVFYIFGACGCAVCLLWFVLY), 255 to 275 (AMIKSLPLWAISFCCFAYLWT), 304 to 324 (LPYLFAWICGVIAGHTADFLM), 337 to 357 (LFTAIGLLLPIVFSMCLLYLS), 363 to 383 (TITFLILANASSSFCLGGALI), 399 to 419 (VTTLIGMTGGMTSSTVAGLFL), and 428 to 448 (FKIFLLMSIINVISVIFYLIF).

The protein belongs to the major facilitator superfamily. Sodium/anion cotransporter family. As to quaternary structure, interacts with PDZK1. In terms of tissue distribution, kidney cortex and liver.

It localises to the apical cell membrane. It catalyses the reaction 3 Na(+)(out) + phosphate(out) = 3 Na(+)(in) + phosphate(in). The enzyme catalyses urate(out) = urate(in). Functionally, important for the resorption of phosphate by the kidney. May be involved in actively transporting phosphate into cells via Na(+) cotransport in the renal brush border membrane. Plays a role in urate transport in the kidney. The protein is Sodium-dependent phosphate transport protein 1 (SLC17A1) of Oryctolagus cuniculus (Rabbit).